The sequence spans 212 residues: 3,4-dihydroxy-2-butanone 4-phosphate synthase (212 aa).

D-ribulose 5-phosphate contacts are provided by residues 37–38 (RE), Asp42, 150–154 (RRGHT), and Glu174. Glu38 serves as a coordination point for Mg(2+). His153 is a binding site for Mg(2+).

It belongs to the DHBP synthase family. As to quaternary structure, homodimer. It depends on Mg(2+) as a cofactor. The cofactor is Mn(2+).

The enzyme catalyses D-ribulose 5-phosphate = (2S)-2-hydroxy-3-oxobutyl phosphate + formate + H(+). Its pathway is cofactor biosynthesis; riboflavin biosynthesis; 2-hydroxy-3-oxobutyl phosphate from D-ribulose 5-phosphate: step 1/1. Functionally, catalyzes the conversion of D-ribulose 5-phosphate to formate and 3,4-dihydroxy-2-butanone 4-phosphate. The polypeptide is 3,4-dihydroxy-2-butanone 4-phosphate synthase (Histophilus somni (strain 129Pt) (Haemophilus somnus)).